A 351-amino-acid polypeptide reads, in one-letter code: 5-deoxyribose 1-phosphate isomerase (351 aa).

Substrate is bound by residues 48–50, Arg-91, and Gln-198; that span reads RGA. Catalysis depends on Asp-239, which acts as the Proton donor. 249–250 is a substrate binding site; sequence NK.

This sequence belongs to the EIF-2B alpha/beta/delta subunits family. DrdI subfamily.

It catalyses the reaction 5-deoxy-alpha-D-ribose 1-phosphate = 5-deoxy-D-ribulose 1-phosphate. The protein operates within carbohydrate degradation. Its function is as follows. Catalyzes the isomerization of 5-deoxy-alpha-D-ribose 1-phosphate to 5-deoxy-D-ribulose 1-phosphate, as part of a 5-deoxyribose salvage pathway that recycles this toxic radical SAM enzyme by-product to mainstream metabolites. The polypeptide is 5-deoxyribose 1-phosphate isomerase (Moorella thermoacetica (strain ATCC 39073 / JCM 9320)).